A 320-amino-acid chain; its full sequence is AA9 family lytic polysaccharide monooxygenase-like protein CEL1 (320 aa).

Residues 1 to 29 (MRLPSRQQVLKMLATFSLALGLFAAKVQA) form the signal peptide. Disulfide bonds link Cys78–Cys199 and Cys121–Cys126. Residue His109 coordinates Cu(2+). Asn163 is a glycosylation site (N-linked (GlcNAc...) asparagine). O2 is bound by residues His189 and Gln194. Tyr196 lines the Cu(2+) pocket. Residues 255 to 284 (GSGGNGGSPTTTPHTTTPITTSPPPTSTPG) are disordered. Residues 262 to 274 (SPTTTPHTTTPIT) show a composition bias toward low complexity. The region spanning 284–320 (GTIPQYGQCGGIGWTGGTGCVAPYQCKVINDYYSQCL) is the CBM1 domain.

Belongs to the polysaccharide monooxygenase AA9 family. The cofactor is Cu(2+).

It is found in the secreted. It catalyses the reaction [(1-&gt;4)-beta-D-glucosyl]n+m + reduced acceptor + O2 = 4-dehydro-beta-D-glucosyl-[(1-&gt;4)-beta-D-glucosyl]n-1 + [(1-&gt;4)-beta-D-glucosyl]m + acceptor + H2O.. In terms of biological role, lytic polysaccharide monooxygenase (LPMO)-like protein that binds strongly to cellulose. Seems not to acts as an endoglucanase, a ceUobiohydrolase able to hydrolyze fluorogenic cellobiosides, a /3-glucosidase, a xylanase, nor a cellobiose:quinone oxidoreductase. The sequence is that of AA9 family lytic polysaccharide monooxygenase-like protein CEL1 from Agaricus bisporus (White button mushroom).